A 1087-amino-acid polypeptide reads, in one-letter code: Exportin-7 (1087 aa).

At Ala-2 the chain carries N-acetylalanine. An Importin N-terminal domain is found at 30-96; sequence AEKALVEFTN…RNYVLNYLAT (67 aa). Residue Ser-570 is modified to Phosphoserine.

It belongs to the exportin family. As to quaternary structure, binds to nucleoporins. Found in a complex with XPO7, EIF4A1, ARHGAP1, VPS26A, VPS29, VPS35 and SFN. Interacts with ARHGAP1 and SFN. Interacts with Ran and cargo proteins in a GTP-dependent manner. As to expression, highly expressed in testis and spleen, moderate in kidney and liver and low in heart, brain, lung and skeletal muscle.

The protein localises to the cytoplasm. The protein resides in the nucleus. Its function is as follows. Mediates the nuclear export of proteins (cargos) with broad substrate specificity. In the nucleus binds cooperatively to its cargo and to the GTPase Ran in its active GTP-bound form. Docking of this trimeric complex to the nuclear pore complex (NPC) is mediated through binding to nucleoporins. Upon transit of a nuclear export complex into the cytoplasm, disassembling of the complex and hydrolysis of Ran-GTP to Ran-GDP (induced by RANBP1 and RANGAP1, respectively) cause release of the cargo from the export receptor. XPO7 then return to the nuclear compartment and mediate another round of transport. The directionality of nuclear export is thought to be conferred by an asymmetric distribution of the GTP- and GDP-bound forms of Ran between the cytoplasm and nucleus. This is Exportin-7 (Xpo7) from Mus musculus (Mouse).